Consider the following 269-residue polypeptide: Autophagy-related protein 5 (269 aa).

K102 is covalently cross-linked (Glycyl lysine isopeptide (Lys-Gly) (interchain with G-Cter in ATG12)).

It belongs to the ATG5 family. Conjugated with ATG12. The ATG5-ATG12 conjugate forms a complex with several units of ATG16. The ATG12-ATG5 conjugate also associates with ATG3. Conjugated to ATG12; which is essential for autophagy. Conjugation with ATG12 involves ATG7 as an E1-like activating enzyme and ATG10 as an E2-like conjugating enzyme.

The protein resides in the preautophagosomal structure membrane. Its function is as follows. Involved in cytoplasm to vacuole transport (Cvt) and autophagic vesicle formation. Autophagy is essential for maintenance of amino acid levels and protein synthesis under nitrogen starvation. Required for selective autophagic degradation of the nucleus (nucleophagy). Also required for mitophagy, which eliminates defective or superfluous mitochondria in order to fulfill cellular energy requirements and prevent excess ROS production. Conjugation with ATG12, through a ubiquitin-like conjugating system involving ATG7 as an E1-like activating enzyme and ATG10 as an E2-like conjugating enzyme, is essential for its function. The ATG12-ATG5 conjugate acts as an E3-like enzyme which is required for lipidation of ATG8 and ATG8 association to the vesicle membranes. ATG12-ATG5 rearranges the ATG3 catalytic center and enhances its E2 activity. Required for proper vegetative growth, asexual/sexual reproduction, but, unlike several plant and animal pathogenic fungi, where ATG5 is required for infection, in B.bassiana it is dispensable for pathogenesis. In Beauveria bassiana (strain ARSEF 2860) (White muscardine disease fungus), this protein is Autophagy-related protein 5.